A 1286-amino-acid chain; its full sequence is MRRLICKRICDYKSFDDEESVDGNRPSSAASAFKVPAPKTPGNPVSSARKPGSAGGPKVGGPSKEGGAGAVDEDDFIKAFTDVPSVQIYSSRELEETLNKIREILSDDKHDWDQRANALKKIRSLLVAGAAQYDCFFQHLRLLDGALKLSAKDLRSQVVREACITVAHLSTVLGNKFDHGAEAIVPTLFNLVPNSAKVMATSGCAAIRFIIRHTHVPRLIPLITSNCTSKSVPVRRRSFEFLDLLLQEWQTHSLERHAAVLVETIKKGIHDADAEARVEARKTYMGLRNHFPGEAETLYNSLEPSYQKSLQTYLKSSGSVASLPQSDRSSSSSQESLNRPFSSKWSTANPSTVAGRVSVGGSKANPLPGSLQRSRSDIDVNAAAGAKAHHAAGQAVRSGRLGAGALNPGSYASLEDTSDKMDGTASDDGRVRAKLSTPLVAVGNAKTDSRGRSRTKMVSQSQPGSRSGSPGRVLTTTALSTVSSGAQRVLVNSASAQKRSKIPRSQGCSREASPSRLSVARSSRIPRPSVSQGCSREASRESSRDTSPVRSFQPLGPGYGISQSSRLSSSVSAMRVLNTGSDVEEAVADALLLGDIRTKKKPARRRYESYGMHSDDDANSDASSACSERSYSSRNGSIPTYMRQTEDVAEVLNRCASSNWSERKEGLLGLQNLLKNQRTLSRIELKRLCEIFTRMFADPHGKVFSMFLETLVDFIQVHKDDLQDWLFVLLTQLLKKMGADLLGSVQAKVQKALDITRESFPNDLQFNILMRFTVDQTQTPSLKVKVAILKYIETLAKQMDPRDFTNSSETRLAVSRVITWTTEPKSSDVRKAAQSVLISLFELNTPEFTMLLGALPKTFQDGATKLLHNHLRNTGNGTQSSMGSPLTRPTPRSPANWSSPLTSPTNTSQNTLSPSAFDYDTENMNSEDIYSSLRGVTEAIQNFSFRSQEDMSEPVRRDPKKEDGDTICSGPGMSDPRAGGDAADGSQPALDNKASLLHSMPLHSSPRSRDYNPYNYSDSISPFNKSALKEAMFDDDADQFPDDLSLDHSDLVAELLKELSNHNERIEERKIALYELMKLTQEESFSVWDEHFKTILLLLLETLGDKEPTIRALALKVLKEILRHQPARFKNYAELTVMKTLEAHKDPHKEVVRSAEEAASVLATSISPEQCIKVLCPIIQTADYPINLAAIKMQTKVIERVSKETLNMLLPEIMPGLIQGYDNSESSVRKACVFCLVAVHAVIGDELKPHLSQLTGSKMKLLNLYIKRAQTGSAGADPTADVSGQS.

Positions 1-40 (MRRLICKRICDYKSFDDEESVDGNRPSSAASAFKVPAPKT) are golgi localization. 2 positions are modified to phosphoserine: serine 14 and serine 20. Positions 17–67 (DEESVDGNRPSSAASAFKVPAPKTPGNPVSSARKPGSAGGPKVGGPSKEGG) are disordered. The segment covering 53–67 (SAGGPKVGGPSKEGG) has biased composition (gly residues). A TOG 1 region spans residues 66–317 (GGAGAVDEDD…KSLQTYLKSS (252 aa)). HEAT repeat units lie at residues 179-214 (HGAE…IRHT), 215-251 (HVPR…EWQT), and 256-293 (RHAA…HFPG). Positions 320-374 (VASLPQSDRSSSSSQESLNRPFSSKWSTANPSTVAGRVSVGGSKANPLPGSLQRS) are disordered. Phosphoserine is present on residues serine 322, serine 333, and serine 336. The segment covering 322–340 (SLPQSDRSSSSSQESLNRP) has biased composition (low complexity). Polar residues predominate over residues 341 to 352 (FSSKWSTANPST). Phosphoserine occurs at positions 374, 376, and 413. Residues 411–473 (YASLEDTSDK…GSRSGSPGRV (63 aa)) are disordered. The span at 417–431 (TSDKMDGTASDDGRV) shows a compositional bias: basic and acidic residues. Residues 450–565 (RGRSRTKMVS…GPGYGISQSS (116 aa)) form an interaction with microtubules, MAPRE1 and MAPRE3 region. Low complexity predominate over residues 459–473 (SQSQPGSRSGSPGRV). 5 positions are modified to phosphoserine: serine 461, serine 465, serine 469, serine 484, and serine 495. The interval 493–564 (SASAQKRSKI…LGPGYGISQS (72 aa)) is disordered. The SXIP motif 1; mediates interaction with MAPRE1 and targeting to microtubule plus ends signature appears at 500-503 (SKIP). Serine 513 carries the post-translational modification Phosphoserine. An SXIP motif 2; mediates interaction with MAPRE1 and targeting to microtubule plus ends motif is present at residues 523 to 526 (SRIP). Phosphoserine is present on residues serine 531, serine 535, serine 570, serine 572, serine 581, serine 614, and serine 620. Positions 605–616 (RRYESYGMHSDD) are enriched in basic and acidic residues. The interval 605 to 638 (RRYESYGMHSDDDANSDASSACSERSYSSRNGSI) is disordered. Positions 620–634 (SDASSACSERSYSSR) are enriched in low complexity. The TOG 2 stretch occupies residues 642 to 873 (MRQTEDVAEV…TKLLHNHLRN (232 aa)). HEAT repeat units follow at residues 702-739 (KVFS…KMGA) and 764-801 (LQFN…QMDP). Phosphothreonine is present on threonine 779. The interaction with RSN and localization to the Golgi and kinetochores stretch occupies residues 864-1286 (TKLLHNHLRN…DPTADVSGQS (423 aa)). 2 disordered regions span residues 870–920 (HLRN…FDYD) and 944–989 (SFRS…SQPA). 2 stretches are compositionally biased toward polar residues: residues 872–884 (RNTG…SMGS) and 893–914 (SPAN…TLSP). The residue at position 884 (serine 884) is a Phosphoserine. 4 positions are modified to phosphoserine: serine 944, serine 947, serine 1005, and serine 1021. Residues 947–964 (SQEDMSEPVRRDPKKEDG) show a composition bias toward basic and acidic residues. The interval 1009–1286 (RDYNPYNYSD…DPTADVSGQS (278 aa)) is required for cortical localization. HEAT repeat units follow at residues 1046–1083 (LDHS…TQEE), 1090–1127 (EHFK…HQPA), and 1208–1245 (MLLP…VIGD).

Belongs to the CLASP family. In terms of assembly, interacts with microtubules. Interacts with MAPRE1; probably required for targeting to growing microtubule plus ends. Interacts with ERC1, MAPRE3 and PHLDB2. The interaction with ERC1 may be mediated by PHLDB2. Interacts with GCC2; recruits CLASP2 to Golgi membranes. Interacts with CLIP2 and RSN. Interacts with MACF1. Interacts with mtcl2. Interacts with MTCL1. Phosphorylated by GSK3B. Phosphorylation by GSK3B may negatively regulate binding to microtubule lattices in lamella. Isoform 2 is phosphorylated on Ser-241. Highly expressed in brain and at low levels in heart, kidney and lung.

It is found in the cytoplasm. It localises to the cytoskeleton. The protein localises to the microtubule organizing center. The protein resides in the centrosome. Its subcellular location is the chromosome. It is found in the centromere. It localises to the kinetochore. The protein localises to the spindle. The protein resides in the spindle pole. Its subcellular location is the golgi apparatus. It is found in the trans-Golgi network. It localises to the cell membrane. The protein localises to the cell projection. The protein resides in the ruffle membrane. Its subcellular location is the cell cortex. Its function is as follows. Microtubule plus-end tracking protein that promotes the stabilization of dynamic microtubules. Involved in the nucleation of noncentrosomal microtubules originating from the trans-Golgi network (TGN). Required for the polarization of the cytoplasmic microtubule arrays in migrating cells towards the leading edge of the cell. May act at the cell cortex to enhance the frequency of rescue of depolymerizing microtubules by attaching their plus-ends to cortical platforms composed of ERC1 and PHLDB2. This cortical microtubule stabilizing activity is regulated at least in part by phosphatidylinositol 3-kinase signaling. Also performs a similar stabilizing function at the kinetochore which is essential for the bipolar alignment of chromosomes on the mitotic spindle. Acts as a mediator of ERBB2-dependent stabilization of microtubules at the cell cortex. This is CLIP-associating protein 2 (Clasp2) from Mus musculus (Mouse).